We begin with the raw amino-acid sequence, 326 residues long: Acetyl-coenzyme A carboxylase carboxyl transferase subunit alpha (326 aa).

The CoA carboxyltransferase C-terminal domain maps to 44 to 298 (KLETRAMQLR…KQALLDNLDE (255 aa)).

The protein belongs to the AccA family. As to quaternary structure, acetyl-CoA carboxylase is a heterohexamer composed of biotin carboxyl carrier protein (AccB), biotin carboxylase (AccC) and two subunits each of ACCase subunit alpha (AccA) and ACCase subunit beta (AccD).

The protein resides in the cytoplasm. It carries out the reaction N(6)-carboxybiotinyl-L-lysyl-[protein] + acetyl-CoA = N(6)-biotinyl-L-lysyl-[protein] + malonyl-CoA. It participates in lipid metabolism; malonyl-CoA biosynthesis; malonyl-CoA from acetyl-CoA: step 1/1. Its function is as follows. Component of the acetyl coenzyme A carboxylase (ACC) complex. First, biotin carboxylase catalyzes the carboxylation of biotin on its carrier protein (BCCP) and then the CO(2) group is transferred by the carboxyltransferase to acetyl-CoA to form malonyl-CoA. The polypeptide is Acetyl-coenzyme A carboxylase carboxyl transferase subunit alpha (Nostoc sp. (strain PCC 7120 / SAG 25.82 / UTEX 2576)).